The sequence spans 162 residues: NADH-quinone oxidoreductase subunit I (162 aa).

2 4Fe-4S ferredoxin-type domains span residues 53 to 83 and 93 to 122; these read LRRY…IESE and TRYD…ETRV. 8 residues coordinate [4Fe-4S] cluster: C63, C66, C69, C73, C102, C105, C108, and C112.

This sequence belongs to the complex I 23 kDa subunit family. NDH-1 is composed of 14 different subunits. Subunits NuoA, H, J, K, L, M, N constitute the membrane sector of the complex. It depends on [4Fe-4S] cluster as a cofactor.

It is found in the cell inner membrane. It catalyses the reaction a quinone + NADH + 5 H(+)(in) = a quinol + NAD(+) + 4 H(+)(out). NDH-1 shuttles electrons from NADH, via FMN and iron-sulfur (Fe-S) centers, to quinones in the respiratory chain. The immediate electron acceptor for the enzyme in this species is believed to be ubiquinone. Couples the redox reaction to proton translocation (for every two electrons transferred, four hydrogen ions are translocated across the cytoplasmic membrane), and thus conserves the redox energy in a proton gradient. This chain is NADH-quinone oxidoreductase subunit I, found in Nitrosomonas europaea (strain ATCC 19718 / CIP 103999 / KCTC 2705 / NBRC 14298).